The primary structure comprises 237 residues: Phosphoribosylaminoimidazole-succinocarboxamide synthase (237 aa).

The protein belongs to the SAICAR synthetase family.

It carries out the reaction 5-amino-1-(5-phospho-D-ribosyl)imidazole-4-carboxylate + L-aspartate + ATP = (2S)-2-[5-amino-1-(5-phospho-beta-D-ribosyl)imidazole-4-carboxamido]succinate + ADP + phosphate + 2 H(+). It functions in the pathway purine metabolism; IMP biosynthesis via de novo pathway; 5-amino-1-(5-phospho-D-ribosyl)imidazole-4-carboxamide from 5-amino-1-(5-phospho-D-ribosyl)imidazole-4-carboxylate: step 1/2. The protein is Phosphoribosylaminoimidazole-succinocarboxamide synthase of Cronobacter sakazakii (strain ATCC BAA-894) (Enterobacter sakazakii).